A 305-amino-acid chain; its full sequence is Glycine--tRNA ligase alpha subunit (305 aa).

The protein belongs to the class-II aminoacyl-tRNA synthetase family. As to quaternary structure, tetramer of two alpha and two beta subunits.

It is found in the cytoplasm. It carries out the reaction tRNA(Gly) + glycine + ATP = glycyl-tRNA(Gly) + AMP + diphosphate. The chain is Glycine--tRNA ligase alpha subunit from Ligilactobacillus salivarius (strain UCC118) (Lactobacillus salivarius).